A 226-amino-acid polypeptide reads, in one-letter code: V-type proton ATPase subunit E 1 (226 aa).

Ala-2 carries the N-acetylalanine modification. Tyr-56 is modified (phosphotyrosine).

Belongs to the V-ATPase E subunit family. As to quaternary structure, V-ATPase is a heteromultimeric enzyme made up of two complexes: the ATP-hydrolytic V1 complex and the proton translocation V0 complex. The V1 complex consists of three catalytic AB heterodimers that form a heterohexamer, three peripheral stalks each consisting of EG heterodimers, one central rotor including subunits D and F, and the regulatory subunits C and H. The proton translocation complex V0 consists of the proton transport subunit a, a ring of proteolipid subunits c9c'', rotary subunit d, subunits e and f, and the accessory subunits ATP6AP1/Ac45 and ATP6AP2/PRR. Interacts with RABL2/RABL2A; binds preferentially to GTP-bound RABL2. Interacts with ALDOC. Interacts with RAB11B. As to expression, expressed within the midpiece of sperm tail (at protein level). Kidney; localizes to early distal nephron, encompassing thick ascending limbs and distal convoluted tubules (at protein level).

It is found in the apical cell membrane. The protein resides in the cytoplasmic vesicle. The protein localises to the secretory vesicle. It localises to the synaptic vesicle membrane. Its subcellular location is the clathrin-coated vesicle membrane. Subunit of the V1 complex of vacuolar(H+)-ATPase (V-ATPase), a multisubunit enzyme composed of a peripheral complex (V1) that hydrolyzes ATP and a membrane integral complex (V0) that translocates protons. V-ATPase is responsible for acidifying and maintaining the pH of intracellular compartments and in some cell types, is targeted to the plasma membrane, where it is responsible for acidifying the extracellular environment. The chain is V-type proton ATPase subunit E 1 (Atp6v1e1) from Mus musculus (Mouse).